Reading from the N-terminus, the 397-residue chain is Subtilisin-like protease 3 (397 aa).

The first 19 residues, 1 to 19, serve as a signal peptide directing secretion; that stretch reads MGCIKVISVFLAAIAAVDA. Positions 20-116 are excised as a propeptide; that stretch reads RAFFHNRGGS…VEHDRVVKLA (97 aa). The region spanning 35–116 is the Inhibitor I9 domain; it reads SYIVVMKDGV…VEHDRVVKLA (82 aa). One can recognise a Peptidase S8 domain in the interval 126–397; it reads TWGLGRVSHR…NRLLYNGSGQ (272 aa). Catalysis depends on charge relay system residues D158 and H189. N-linked (GlcNAc...) asparagine glycosylation is present at N250. S344 serves as the catalytic Charge relay system. N393 is a glycosylation site (N-linked (GlcNAc...) asparagine).

Belongs to the peptidase S8 family.

The protein resides in the secreted. Its function is as follows. Secreted subtilisin-like serine protease with keratinolytic activity that contributes to pathogenicity. The polypeptide is Subtilisin-like protease 3 (SUB3) (Trichophyton tonsurans (Scalp ringworm fungus)).